The sequence spans 228 residues: 7-cyano-7-deazaguanine synthase (228 aa).

10 to 20 contributes to the ATP binding site; that stretch reads FSGGQDSTTLA. Zn(2+)-binding residues include C190, C205, C208, and C211.

The protein belongs to the QueC family. Zn(2+) serves as cofactor.

It carries out the reaction 7-carboxy-7-deazaguanine + NH4(+) + ATP = 7-cyano-7-deazaguanine + ADP + phosphate + H2O + H(+). It functions in the pathway purine metabolism; 7-cyano-7-deazaguanine biosynthesis. Its function is as follows. Catalyzes the ATP-dependent conversion of 7-carboxy-7-deazaguanine (CDG) to 7-cyano-7-deazaguanine (preQ(0)). This is 7-cyano-7-deazaguanine synthase from Helicobacter pylori (strain HPAG1).